Reading from the N-terminus, the 293-residue chain is Phosphatidylglycerol--prolipoprotein diacylglyceryl transferase (293 aa).

The next 4 helical transmembrane spans lie at 45–65, 81–101, 115–135, and 144–164; these read FELR…YFVA, ELIF…YVLF, IWEG…TGFL, and FTFL…QAIG. A 1,2-diacyl-sn-glycero-3-phospho-(1'-sn-glycerol) is bound at residue Arg-165. 3 consecutive transmembrane segments (helical) span residues 204-224, 231-249, and 262-282; these read PTFL…SVYF, HGEV…RIVI, and IKAA…GFLI.

This sequence belongs to the Lgt family.

Its subcellular location is the cell inner membrane. The enzyme catalyses L-cysteinyl-[prolipoprotein] + a 1,2-diacyl-sn-glycero-3-phospho-(1'-sn-glycerol) = an S-1,2-diacyl-sn-glyceryl-L-cysteinyl-[prolipoprotein] + sn-glycerol 1-phosphate + H(+). It functions in the pathway protein modification; lipoprotein biosynthesis (diacylglyceryl transfer). In terms of biological role, catalyzes the transfer of the diacylglyceryl group from phosphatidylglycerol to the sulfhydryl group of the N-terminal cysteine of a prolipoprotein, the first step in the formation of mature lipoproteins. The polypeptide is Phosphatidylglycerol--prolipoprotein diacylglyceryl transferase (Thermotoga maritima (strain ATCC 43589 / DSM 3109 / JCM 10099 / NBRC 100826 / MSB8)).